The chain runs to 211 residues: Outer-membrane lipoprotein carrier protein (211 aa).

The first 24 residues, 1-24 (MRNRIIVSACAALAMFAIQAPAHA), serve as a signal peptide directing secretion.

It belongs to the LolA family. In terms of assembly, monomer.

The protein localises to the periplasm. Its function is as follows. Participates in the translocation of lipoproteins from the inner membrane to the outer membrane. Only forms a complex with a lipoprotein if the residue after the N-terminal Cys is not an aspartate (The Asp acts as a targeting signal to indicate that the lipoprotein should stay in the inner membrane). The polypeptide is Outer-membrane lipoprotein carrier protein (Cupriavidus necator (strain ATCC 17699 / DSM 428 / KCTC 22496 / NCIMB 10442 / H16 / Stanier 337) (Ralstonia eutropha)).